Here is a 181-residue protein sequence, read N- to C-terminus: Ferritin (181 aa).

The Ferritin-like diiron domain maps to 6–155 (RHNYHEDCEP…NLITRLKRAG (150 aa)). E23, E58, H61, E103, and Q137 together coordinate Fe cation.

Belongs to the ferritin family. In terms of assembly, oligomer of 12 or 24 subunits. The functional molecule is roughly spherical and contains a central cavity into which the polymeric mineral iron core is deposited. In terms of processing, the N-terminus is blocked.

The protein localises to the cytoplasm. The catalysed reaction is 4 Fe(2+) + O2 + 4 H(+) = 4 Fe(3+) + 2 H2O. In terms of biological role, stores iron in a soluble, non-toxic, readily available form. Important for iron homeostasis. Has ferroxidase activity. Iron is taken up in the ferrous form and deposited as ferric hydroxides after oxidation. This is Ferritin from Pacifastacus leniusculus (Signal crayfish).